A 403-amino-acid polypeptide reads, in one-letter code: G2/mitotic-specific cyclin-B3 (403 aa).

Disordered stretches follow at residues 1–86 and 102–122; these read MPVA…APPA and RKTP…PEEP. Polar residues predominate over residues 7–25; sequence SKAQSSKQPRASKAPSVTE. A D-box motif is present at residues 51 to 59; sequence RSAFGDITN.

This sequence belongs to the cyclin family. Cyclin AB subfamily. Interacts with the CDK1 and CDK2 protein kinases. Ubiquitinated, leading to its degradation.

It is found in the nucleus. In terms of biological role, cyclins are positive regulatory subunits of the cyclin-dependent kinases (CDKs), and thereby play an essential role in the control of the cell cycle, notably via their destruction during cell division. Could be involved at the G2/M (mitosis or meiosis) transition. G2/M cyclins accumulate steadily during G2 and are abruptly destroyed at mitosis. The protein is G2/mitotic-specific cyclin-B3 (CCNB3) of Gallus gallus (Chicken).